The chain runs to 444 residues: Signal recognition particle 54 kDa protein (444 aa).

Residues 106 to 113, 187 to 191, and 245 to 248 each bind GTP; these read GLQGSGKT, DTAGR, and SKLD.

This sequence belongs to the GTP-binding SRP family. SRP54 subfamily. As to quaternary structure, part of the signal recognition particle protein translocation system, which is composed of SRP and FtsY. Archaeal SRP consists of a 7S RNA molecule of 300 nucleotides and two protein subunits: SRP54 and SRP19.

The protein resides in the cytoplasm. The enzyme catalyses GTP + H2O = GDP + phosphate + H(+). In terms of biological role, involved in targeting and insertion of nascent membrane proteins into the cytoplasmic membrane. Binds to the hydrophobic signal sequence of the ribosome-nascent chain (RNC) as it emerges from the ribosomes. The SRP-RNC complex is then targeted to the cytoplasmic membrane where it interacts with the SRP receptor FtsY. The polypeptide is Signal recognition particle 54 kDa protein (Methanosphaera stadtmanae (strain ATCC 43021 / DSM 3091 / JCM 11832 / MCB-3)).